A 239-amino-acid polypeptide reads, in one-letter code: Increased recombination centers protein 22-2 (239 aa).

A signal peptide spans 1 to 19 (MKLSTIFTAFAATIATVAG). Topologically, residues 20 to 161 (YETTGSKQTV…AAVSFFDPRL (142 aa)) are lumenal. The helical transmembrane segment at 162–182 (IFLELVLLITFAGLIYVGYEI) threads the bilayer. The Cytoplasmic portion of the chain corresponds to 183–239 (WGKQYFKGVAPVKAKKVSAAKASSPVATGPSTTSATGYDTNWIPESHLKQKKTKKVN). Residues 202–222 (AKASSPVATGPSTTSATGYDT) are disordered. Residues 211-221 (GPSTTSATGYD) are compositionally biased toward polar residues.

Belongs to the IRC22 family.

The protein localises to the endoplasmic reticulum membrane. Functionally, is probably involved in a pathway contributing to genomic integrity. The sequence is that of Increased recombination centers protein 22-2 (IRC22-2) from Candida albicans (strain SC5314 / ATCC MYA-2876) (Yeast).